A 206-amino-acid polypeptide reads, in one-letter code: Small ribosomal subunit protein uS4 (206 aa).

One can recognise an S4 RNA-binding domain in the interval 96–157 (RRLDNVVYRM…KAKKQVRIQD (62 aa)).

The protein belongs to the universal ribosomal protein uS4 family. In terms of assembly, part of the 30S ribosomal subunit. Contacts protein S5. The interaction surface between S4 and S5 is involved in control of translational fidelity.

Functionally, one of the primary rRNA binding proteins, it binds directly to 16S rRNA where it nucleates assembly of the body of the 30S subunit. With S5 and S12 plays an important role in translational accuracy. The protein is Small ribosomal subunit protein uS4 of Thioalkalivibrio sulfidiphilus (strain HL-EbGR7).